Reading from the N-terminus, the 94-residue chain is Co-chaperonin GroES (94 aa).

The protein belongs to the GroES chaperonin family. As to quaternary structure, heptamer of 7 subunits arranged in a ring. Interacts with the chaperonin GroEL.

It is found in the cytoplasm. Its function is as follows. Together with the chaperonin GroEL, plays an essential role in assisting protein folding. The GroEL-GroES system forms a nano-cage that allows encapsulation of the non-native substrate proteins and provides a physical environment optimized to promote and accelerate protein folding. GroES binds to the apical surface of the GroEL ring, thereby capping the opening of the GroEL channel. The sequence is that of Co-chaperonin GroES from Streptococcus agalactiae serotype III (strain NEM316).